A 156-amino-acid polypeptide reads, in one-letter code: Small ribosomal subunit protein uS7 (156 aa).

The protein belongs to the universal ribosomal protein uS7 family. In terms of assembly, part of the 30S ribosomal subunit. Contacts proteins S9 and S11.

In terms of biological role, one of the primary rRNA binding proteins, it binds directly to 16S rRNA where it nucleates assembly of the head domain of the 30S subunit. Is located at the subunit interface close to the decoding center, probably blocks exit of the E-site tRNA. This chain is Small ribosomal subunit protein uS7, found in Rhodococcus opacus (strain B4).